The sequence spans 718 residues: Calpastatin (718 aa).

Disordered regions lie at residues 1–189 and 210–238; these read MNPA…MSST and EKKT…LSSD. Residues 20-29 are compositionally biased toward basic residues; that stretch reads PHSKKRHRRQ. 2 stretches are compositionally biased toward basic and acidic residues: residues 30 to 61 and 68 to 104; these read DAKT…EHTK and HASD…KPQD. A Glycyl lysine isopeptide (Lys-Gly) (interchain with G-Cter in SUMO2) cross-link involves residue K32. K49 is modified (N6-acetyllysine). Residue S86 is modified to Phosphoserine. Residues 114-124 are compositionally biased toward low complexity; sequence AAGTTAAPGKA. 3 positions are modified to phosphoserine: S133, S222, and S243. One copy of the Inhibitory domain 1 repeat lies at 170-222; the sequence is TQEDSTAYTGPEISDPMSSTYIEELGKREVTIPPKYRELLEKKTGVAGPPPDS. Disordered regions lie at residues 266-291 and 320-509; these read ESAK…AMSD and EAKR…QLPA. Blocked amino end (Ser); in form erythrocyte is present on S290. An Inhibitory domain 2 repeat occupies 307 to 359; the sequence is EPELDLSSIKEVAEAKRKEEKVEKCGEDDETVPAEYRLKPATDKDGKPLLPEP. Basic and acidic residues-rich tracts occupy residues 320–331, 342–377, and 384–399; these read EAKRKEEKVEKC, YRLK…ELSK, and SNEK…EESK. S367, S369, and S376 each carry phosphoserine. The span at 400–411 shows a compositional bias: low complexity; sequence AAVPAPVAEAVP. A Phosphoserine modification is found at S444. Residues 446–496 are compositionally biased toward basic and acidic residues; the sequence is GRKEADPEEGKPVADKIKEKSKEEEREKLGEKEETIPPDYRLEEAKDKDGK. An Inhibitory domain 3 repeat occupies 450-503; that stretch reads ADPEEGKPVADKIKEKSKEEEREKLGEKEETIPPDYRLEEAKDKDGKPLLPSEP. Phosphoserine is present on residues S520, S531, S579, and S581. Residues 543–718 form a disordered region; it reads VSEVVSQSPA…KPKANEKNAS (176 aa). Residues 566–579 show a composition bias toward basic and acidic residues; sequence PSNKELDDALDKLS. An Inhibitory domain 4 repeat occupies 587-640; that stretch reads PDPDENKPMEDKVKERAKKEHKDKLGERDDTIPPEYRHLLDQGEQDKPEKPPTK. 2 stretches are compositionally biased toward basic and acidic residues: residues 587–650 and 706–718; these read PDPD…KPAG and ETSK…KNAS.

It belongs to the protease inhibitor I27 (calpastatin) family.

In terms of biological role, specific inhibition of calpain (calcium-dependent cysteine protease). Plays a key role in postmortem tenderization of meat and have been proposed to be involved in muscle protein degradation in living tissue. The polypeptide is Calpastatin (CAST) (Oryctolagus cuniculus (Rabbit)).